We begin with the raw amino-acid sequence, 289 residues long: 33 kDa chaperonin (289 aa).

2 cysteine pairs are disulfide-bonded: C225-C227 and C258-C261.

Belongs to the HSP33 family. Under oxidizing conditions two disulfide bonds are formed involving the reactive cysteines. Under reducing conditions zinc is bound to the reactive cysteines and the protein is inactive.

The protein resides in the cytoplasm. Functionally, redox regulated molecular chaperone. Protects both thermally unfolding and oxidatively damaged proteins from irreversible aggregation. Plays an important role in the bacterial defense system toward oxidative stress. This is 33 kDa chaperonin from Nitrosococcus oceani (strain ATCC 19707 / BCRC 17464 / JCM 30415 / NCIMB 11848 / C-107).